Here is a 76-residue protein sequence, read N- to C-terminus: FMRFamide-related neuropeptides (76 aa).

An N-terminal signal peptide occupies residues 1 to 27 (MCVQTRMLVAVAVVLVVLAVLSDPVSA). Phenylalanine amide is present on Phe-39.

The protein belongs to the FARP (FMRFamide related peptide) family. In terms of tissue distribution, olfactory lobe and accessory lobe, olfactory globular tract, olfactory lobe cells (at protein level). Widely distributed throughout nervous system.

Its subcellular location is the secreted. Its function is as follows. GYRKPPFNGSIF-amide may be involved in olfaction and contraction of hindgut. This Procambarus clarkii (Red swamp crayfish) protein is FMRFamide-related neuropeptides.